The primary structure comprises 339 residues: DNA-directed RNA polymerase subunit alpha (339 aa).

The alpha N-terminal domain (alpha-NTD) stretch occupies residues 1–237 (MENELMYMNW…EQMNVFINFD (237 aa)). The tract at residues 256 to 339 (FNENLYRSVN…PPAEDNKEGE (84 aa)) is alpha C-terminal domain (alpha-CTD).

The protein belongs to the RNA polymerase alpha chain family. In terms of assembly, homodimer. The RNAP catalytic core consists of 2 alpha, 1 beta, 1 beta' and 1 omega subunit. When a sigma factor is associated with the core the holoenzyme is formed, which can initiate transcription.

The catalysed reaction is RNA(n) + a ribonucleoside 5'-triphosphate = RNA(n+1) + diphosphate. Functionally, DNA-dependent RNA polymerase catalyzes the transcription of DNA into RNA using the four ribonucleoside triphosphates as substrates. This chain is DNA-directed RNA polymerase subunit alpha, found in Desulfosudis oleivorans (strain DSM 6200 / JCM 39069 / Hxd3) (Desulfococcus oleovorans).